The sequence spans 185 residues: MSSPPRGEVAARLEPVVAEAVSAAGFDLEELDVQQAGRRRLVKVVVDAEEGVGLDEISEISRAVSKVLDAHEHVLAGSYTLEVTSPGVDRPLTRPRHWRRARYRLVRVRLADGSDLVVRVGEADDEGVVVLADGEIRTLAYRDVERAVVEVEFQQPPAEDLVRLERAADGAPERGGDRGDTEESR.

Residues 162–185 (VRLERAADGAPERGGDRGDTEESR) form a disordered region.

Belongs to the RimP family.

It is found in the cytoplasm. In terms of biological role, required for maturation of 30S ribosomal subunits. The protein is Ribosome maturation factor RimP of Saccharopolyspora erythraea (strain ATCC 11635 / DSM 40517 / JCM 4748 / NBRC 13426 / NCIMB 8594 / NRRL 2338).